We begin with the raw amino-acid sequence, 241 residues long: Eukaryotic translation initiation factor 3 subunit J (241 aa).

Residues 1 to 27 (MEEDWEQHGEKEEVPLPAKKPDANKWD) are compositionally biased toward basic and acidic residues. Residues 1–99 (MEEDWEQHGE…ENMTPEQKLA (99 aa)) form a disordered region. Residues 28–45 (GEDEEEEVKDSWEDEDEL) show a composition bias toward acidic residues. Residues 31–119 (EEEEVKDSWE…ESDLKNALDT (89 aa)) adopt a coiled-coil conformation. Basic and acidic residues-rich tracts occupy residues 46–58 (EEKK…ETPK) and 69–90 (IVEK…KEAE).

Belongs to the eIF-3 subunit J family. In terms of assembly, component of the eukaryotic translation initiation factor 3 (eIF-3) complex.

It is found in the cytoplasm. Component of the eukaryotic translation initiation factor 3 (eIF-3) complex, which is involved in protein synthesis of a specialized repertoire of mRNAs and, together with other initiation factors, stimulates binding of mRNA and methionyl-tRNAi to the 40S ribosome. The eIF-3 complex specifically targets and initiates translation of a subset of mRNAs involved in cell proliferation. The protein is Eukaryotic translation initiation factor 3 subunit J of Culex quinquefasciatus (Southern house mosquito).